A 520-amino-acid polypeptide reads, in one-letter code: MPFSNETEMSQCSNAKRRVNDPLTGPKNCSTSSTDSGVILNDNVAAFRPEKETKDRGTGEGQFQSKSEEKTESKRISVEHTVNITTENVGKTSSPAVSIRSTTISVVSIDDNAIDSSSIDSDSEAEAEDYTVQKLGHQVTYPPNSSHLRDLNQGLTVISRHVAPGEAAVPPPNPLEAGIVAKQILNGNLAVATPTSPAGGATQGIGSIALTNSTDVTFGDKHFYEGPVTIQQFLIDNRDKWKPGEGPAGGQDNPAFNGGPSTNGSAPGSKHEDPAQTPPICPFLPNTVGRKAVTVTVVFVTLTFLLGIVLATTTNLFGKTLNQSKIRDDDDYRQNIPINSTIDLDNIGGGLILRFVERQQWLAQPPQKEIPDLELPVGLVIALPTNSENCSTQAICVLRVRLLQTYDIESSQKCDIAYNFLIGGDGNVYVGRGWNKMGAHMNNINYDSQSLSFAYIGSFKTIQPSAKQLSVTRLLLERGVKLGKIAPSYRFTASSKLMPSVTDFKADALYASFANWTHWS.

Polar residues-rich tracts occupy residues 1–14 (MPFS…QCSN) and 27–36 (KNCSTSSTDS). 2 disordered regions span residues 1–78 (MPFS…RISV) and 239–278 (DKWK…AQTP). Topologically, residues 1 to 291 (MPFSNETEMS…PFLPNTVGRK (291 aa)) are cytoplasmic. 2 stretches are compositionally biased toward basic and acidic residues: residues 48–58 (RPEKETKDRGT) and 66–78 (KSEE…RISV). The helical; Signal-anchor for type II membrane protein transmembrane segment at 292–312 (AVTVTVVFVTLTFLLGIVLAT) threads the bilayer. At 313-520 (TTNLFGKTLN…ASFANWTHWS (208 aa)) the chain is on the extracellular side. N-linked (GlcNAc...) asparagine glycosylation occurs at asparagine 389. Cysteine 390 and cysteine 396 are joined by a disulfide. The N-acetylmuramoyl-L-alanine amidase domain maps to 412–490 (QKCDIAYNFL…KLGKIAPSYR (79 aa)). An N-linked (GlcNAc...) asparagine glycan is attached at asparagine 515.

It belongs to the N-acetylmuramoyl-L-alanine amidase 2 family. Proteolytically cleaved, probably by a metaloprotease such as Mmp2; proteolytic cleavage leads to activation of the imd/Relish signaling pathway. Expressed in the fat body and hemocytes.

Its subcellular location is the membrane. Activated by proteolytic cleavage in response to Gram-negative bacterial infection; cleavage may be mediated by endogenous proteases, such as the metalloprotease Mmp2 or elastase, or by bacterially expressed proteases such as the surface serine protease OmpT. In terms of biological role, major activator of the imd/Relish pathway and is likely to encode a pattern recognition molecule for the humoral immune response. Required for Relish processing and nuclear translocation following proteolytic cleavage. Involved in the response to lipopolysaccharide (LPS) and peptidoglycan of Gram-negative bacteria. The different isoforms probably display different recognition capabilities to various microbial patterns. Mediates the response to LPS and Gram-negative bacteria. Functionally, mediates the response to LPS, peptidoglycan and Gram-negative bacteria. The protein is Peptidoglycan-recognition protein LC (PGRP-LC) of Drosophila melanogaster (Fruit fly).